Consider the following 315-residue polypeptide: uncharacterized protein (315 aa).

At 1-38 the chain is on the cytoplasmic side; the sequence is MDVLLSLPQPELFKTTVIPFLANRNIIKSEAILSNLHS. A helical transmembrane segment spans residues 39-59; sequence IFYVAIFYHIWFLFGKWILFP. Topologically, residues 60 to 101 are lumenal; it reads HLVKWKLDYDQKHNVKKDEKTTSERQAQHYKKKYTSLINQSS. The TLC domain maps to 95-302; sequence SLINQSSVHL…MVSVAAKVLK (208 aa). The helical transmembrane segment at 102–122 threads the bilayer; that stretch reads VHLISLLQSIVVLYYSLKFLL. Over 123-144 the chain is Cytoplasmic; it reads DPKASAEPYQTSHSRVFTENRD. A helical membrane pass occupies residues 145 to 165; the sequence is TQVICIFAIGYFVWDIYISTM. At 166–170 the chain is on the lumenal side; that stretch reads YSTFP. A helical transmembrane segment spans residues 171–190; that stretch reads FVVHGIISTVVFCIGLKPYI. Residues 191–225 are Cytoplasmic-facing; sequence QYYAPVFLMFELSNPSLNFRWFGIKFLPQKSKFCS. The chain crosses the membrane as a helical span at residues 226 to 246; the sequence is LLLLLNNLTLMVVFFAARIAW. Over 247 to 264 the chain is Lumenal; that stretch reads GWFQIGKLCYDFYQVRNE. A helical transmembrane segment spans residues 265-285; that stretch reads PGFLVFDTIVILAGNFVLDIL. Residues 286 to 315 lie on the Cytoplasmic side of the membrane; sequence NVIWFSTMVSVAAKVLKKGESVDKVTKNEQ.

It is found in the endoplasmic reticulum membrane. This is an uncharacterized protein from Saccharomyces cerevisiae (strain ATCC 204508 / S288c) (Baker's yeast).